Reading from the N-terminus, the 307-residue chain is Protoheme IX farnesyltransferase (307 aa).

Helical transmembrane passes span isoleucine 33–phenylalanine 53, leucine 62–isoleucine 82, arginine 111–threonine 131, valine 132–tryptophan 152, leucine 159–valine 179, isoleucine 185–leucine 205, methionine 229–phenylalanine 249, leucine 251–leucine 271, and phenylalanine 287–tryptophan 307.

This sequence belongs to the UbiA prenyltransferase family. Protoheme IX farnesyltransferase subfamily. As to quaternary structure, interacts with CtaA.

It localises to the cell membrane. The enzyme catalyses heme b + (2E,6E)-farnesyl diphosphate + H2O = Fe(II)-heme o + diphosphate. The protein operates within porphyrin-containing compound metabolism; heme O biosynthesis; heme O from protoheme: step 1/1. Functionally, converts heme B (protoheme IX) to heme O by substitution of the vinyl group on carbon 2 of heme B porphyrin ring with a hydroxyethyl farnesyl side group. In Geobacillus thermodenitrificans (strain NG80-2), this protein is Protoheme IX farnesyltransferase.